Consider the following 90-residue polypeptide: MSFLSFLLGQKKSSASVAKERLQIILAHERSGRGDSPDYLPQLQQELVAVISKYVKINPDDIKVHLERQDTLEVLEVKIEMPQSETQASV.

This sequence belongs to the MinE family.

In terms of biological role, prevents the cell division inhibition by proteins MinC and MinD at internal division sites while permitting inhibition at polar sites. This ensures cell division at the proper site by restricting the formation of a division septum at the midpoint of the long axis of the cell. The polypeptide is Cell division topological specificity factor (Bordetella avium (strain 197N)).